The following is a 355-amino-acid chain: Sesquiterpene synthase-like protein Agr11 (355 aa).

The protein belongs to the terpene synthase family.

This is Sesquiterpene synthase-like protein Agr11 from Cyclocybe aegerita (Black poplar mushroom).